We begin with the raw amino-acid sequence, 285 residues long: MLPITVVTLFAALAAAAPASVSMEKRRVEGELVVRADAAPPAVLTELSSPVASAPAAEASKAGDAAKAGDAAKAGDAAKAGDAAKGGDAKGGDAKGGDAKGGDAKGGKGGDAKGGKGGDAAKGGKGGDAAKGGKGGDAAKGGNVRGCADLKTNGPVVEHKVVQGDTLGKLTATFQSGICNIAKENNIADPDKIDVGQVLKIPTGLCTQNVDNNSCIKAAVVNPNTDEKGTCLKTGPFTRVIKKGDSFVGIAKELGLQEQAVVDVNPGVDRFNLLPEQTINLPKCK.

Positions 1-16 (MLPITVVTLFAALAAA) are cleaved as a signal peptide. Residues 75-143 (GDAAKAGDAA…KGGDAAKGGN (69 aa)) are disordered. Positions 85-116 (KGGDAKGGDAKGGDAKGGDAKGGKGGDAKGGK) are enriched in basic and acidic residues. A compositionally biased stretch (gly residues) spans 117–139 (GGDAAKGGKGGDAAKGGKGGDAA). LysM domains follow at residues 157–201 (VEHK…VLKI) and 237–281 (FTRV…TINL).

Belongs to the secreted LysM effector family.

Functionally, might have a role in sequestration of chitin oligosaccharides (breakdown products of fungal cell walls that are released during invasion and act as triggers of host immunity) to dampen host defense. This chain is Secreted LysM effector slp2, found in Pyricularia oryzae (strain 70-15 / ATCC MYA-4617 / FGSC 8958) (Rice blast fungus).